We begin with the raw amino-acid sequence, 427 residues long: 3-phosphoshikimate 1-carboxyvinyltransferase (427 aa).

Lys22, Ser23, and Arg27 together coordinate 3-phosphoshikimate. Residue Lys22 participates in phosphoenolpyruvate binding. Phosphoenolpyruvate-binding residues include Gly96 and Arg124. Residues Ser169, Ser170, Gln171, Ser197, Asp313, Asn336, and Lys340 each contribute to the 3-phosphoshikimate site. Gln171 contributes to the phosphoenolpyruvate binding site. Asp313 (proton acceptor) is an active-site residue. Positions 344, 386, and 411 each coordinate phosphoenolpyruvate.

It belongs to the EPSP synthase family. In terms of assembly, monomer.

It localises to the cytoplasm. It catalyses the reaction 3-phosphoshikimate + phosphoenolpyruvate = 5-O-(1-carboxyvinyl)-3-phosphoshikimate + phosphate. The protein operates within metabolic intermediate biosynthesis; chorismate biosynthesis; chorismate from D-erythrose 4-phosphate and phosphoenolpyruvate: step 6/7. Catalyzes the transfer of the enolpyruvyl moiety of phosphoenolpyruvate (PEP) to the 5-hydroxyl of shikimate-3-phosphate (S3P) to produce enolpyruvyl shikimate-3-phosphate and inorganic phosphate. This Escherichia coli O127:H6 (strain E2348/69 / EPEC) protein is 3-phosphoshikimate 1-carboxyvinyltransferase.